Reading from the N-terminus, the 306-residue chain is Pentalenolactone F synthase (306 aa).

Residues histidine 110 and aspartate 112 each coordinate Fe cation. 2 residues coordinate 2-oxoglutarate: threonine 138 and tryptophan 258. Histidine 273 contributes to the Fe cation binding site. Arginine 284 lines the 2-oxoglutarate pocket.

This sequence belongs to the TfdA dioxygenase family. It depends on Fe(2+) as a cofactor.

The enzyme catalyses pentalenolactone D + 2 2-oxoglutarate + 2 O2 = pentalenolactone F + 2 succinate + 2 CO2 + H2O. Its pathway is antibiotic biosynthesis; neopentalenolactone biosynthesis. Its activity is regulated as follows. Activated by ascorbate. Catalyzes the Fe(2+) and alpha-ketoglutarate-dependent oxidation of pentalenolactone D to pentalenolactone F. Also able to catalyze the oxidation of pentalenolactone D to pentalenolactone E. In presence of neopentalenolactone D, mediates production of PL308 and possibly neopentalenolactone E. The chain is Pentalenolactone F synthase (ptlD) from Streptomyces avermitilis (strain ATCC 31267 / DSM 46492 / JCM 5070 / NBRC 14893 / NCIMB 12804 / NRRL 8165 / MA-4680).